The chain runs to 735 residues: Mitochondrial potassium channel ATP-binding subunit (735 aa).

The transit peptide at 1 to 25 (MLVHLFRVGIRGGPFPGRLLPPLRF) directs the protein to the mitochondrion. The Mitochondrial matrix segment spans residues 26–144 (QTFSAVRNTW…KLFWQFLHPH (119 aa)). A helical membrane pass occupies residues 145-165 (LLVLGVAVVLALGAALVNVQI). An ABC transmembrane type-1 domain is found at 150 to 437 (VAVVLALGAA…LSVLFGQVVR (288 aa)). Over 166-195 (PLLLGQLVEVVAKYTRDHVGSFMTESQNLS) the chain is Mitochondrial intermembrane. Residues 196–216 (THLLILYGVQGLLTFGYLVLL) form a helical membrane-spanning segment. The Mitochondrial matrix portion of the chain corresponds to 217 to 295 (SHVGERMAVD…SLSMLSTRLT (79 aa)). The chain crosses the membrane as a helical span at residues 296–316 (LLLMVATPALMGVGTLMGSGL). Topologically, residues 317–735 (RKLSRQCQEQ…EGPRSHQHKS (419 aa)) are mitochondrial intermembrane. The 238-residue stretch at 472-709 (VTFQNVCFSY…GGLYAELIRR (238 aa)) folds into the ABC transporter domain. Residue 507–514 (GQSGGGKT) participates in ATP binding. Residues 712–735 (LDAPRTAAPPPKKPEGPRSHQHKS) are disordered.

This sequence belongs to the ABC transporter superfamily. ABCB family. Multidrug resistance exporter (TC 3.A.1.201) subfamily. In terms of assembly, the mitochondrial potassium channel (mitoK(ATP)) is composed of 4 subunits of CCDC51/MITOK and 4 subunits of ABCB8/MITOSUR. Interacts with C10orf88/PAAT. Interacts with NRP1; NRP1 regulates ABCB8/MITOSUR protein levels in mitochondria. As to expression, ubiquitous.

Its subcellular location is the mitochondrion inner membrane. Its activity is regulated as follows. Channel activity inhibited by ATP via ABCB8/MITOSUR subunit. ATP-binding subunit of the mitochondrial ATP-gated potassium channel (mitoK(ATP)). Together with pore-forming subunit CCDC51/MITOK of the mitoK(ATP) channel, mediates ATP-dependent potassium currents across the mitochondrial inner membrane. An increase in ATP intracellular levels closes the channel, inhibiting K(+) transport, whereas a decrease in ATP levels enhances K(+) uptake in the mitochondrial matrix. Plays a role in mitochondrial iron transport. Required for maintenance of normal cardiac function, possibly by influencing mitochondrial iron export and regulating the maturation of cytosolic iron sulfur cluster-containing enzymes. This is Mitochondrial potassium channel ATP-binding subunit from Homo sapiens (Human).